Consider the following 585-residue polypeptide: Probable ubiquitin carboxyl-terminal hydrolase 9 (585 aa).

The disordered stretch occupies residues 1–23 (MSLLRWMGMNSPGSTDRRKSTWE). In terms of domain architecture, USP spans 41-424 (YGLTNYGNTC…TAYVLFYTAA (384 aa)). Cys-50 serves as the catalytic Nucleophile. The tract at residues 85–110 (CTKTNHPESSSSRHSKKKSMENRKSS) is disordered. Catalysis depends on His-375, which acts as the Proton acceptor. Residues 447–470 (SQLKQESVEVSNLSSTPRSNSTIT) are compositionally biased toward polar residues. Residues 447 to 473 (SQLKQESVEVSNLSSTPRSNSTITYPD) are disordered. Ser-505 is subject to Phosphoserine. Disordered stretches follow at residues 511–530 (FHSR…SRSF) and 540–585 (KFFG…RSKR). Polar residues predominate over residues 542 to 551 (FGSSQSNSPK). Residue Ser-549 is modified to Phosphoserine. Over residues 553-570 (SPLRDTHKSSDEHSESKH) the composition is skewed to basic and acidic residues. Over residues 574-585 (LPWQFSRSRSKR) the composition is skewed to polar residues.

The protein belongs to the peptidase C19 family. Interacts with bun107 and bun62.

The protein localises to the nucleus. Its subcellular location is the cytoplasm. It is found in the cell tip. It catalyses the reaction Thiol-dependent hydrolysis of ester, thioester, amide, peptide and isopeptide bonds formed by the C-terminal Gly of ubiquitin (a 76-residue protein attached to proteins as an intracellular targeting signal).. Functionally, ubiquitin C-terminal hydrolase involved in regulating actin dynamics and/or endocytosis at cell tips and septa. This is Probable ubiquitin carboxyl-terminal hydrolase 9 (ubp9) from Schizosaccharomyces pombe (strain 972 / ATCC 24843) (Fission yeast).